Here is a 721-residue protein sequence, read N- to C-terminus: Polyribonucleotide nucleotidyltransferase (721 aa).

Mg(2+)-binding residues include Asp495 and Asp501. In terms of domain architecture, KH spans 562 to 621; that stretch reads PRITTIKIRPERIKDIIGPGGKTIKDITARTGTSINIEDDGSVSIASPNQDKVEEAIKMI. The S1 motif domain occupies 631–699; that stretch reads GRIYLGTVRK…RSGKIRLSRK (69 aa). The segment at 699 to 721 is disordered; sequence KEALADSAKKSEGTEPPKGEPAK.

This sequence belongs to the polyribonucleotide nucleotidyltransferase family. Requires Mg(2+) as cofactor.

It is found in the cytoplasm. It carries out the reaction RNA(n+1) + phosphate = RNA(n) + a ribonucleoside 5'-diphosphate. Its function is as follows. Involved in mRNA degradation. Catalyzes the phosphorolysis of single-stranded polyribonucleotides processively in the 3'- to 5'-direction. The protein is Polyribonucleotide nucleotidyltransferase of Anaeromyxobacter sp. (strain K).